The sequence spans 377 residues: tRNA/tmRNA (uracil-C(5))-methyltransferase (377 aa).

S-adenosyl-L-methionine contacts are provided by Gln-199, Tyr-227, Asn-232, Glu-248, and Asp-308. The active-site Nucleophile is the Cys-333. Glu-367 serves as the catalytic Proton acceptor.

It belongs to the class I-like SAM-binding methyltransferase superfamily. RNA M5U methyltransferase family. TrmA subfamily.

It carries out the reaction uridine(54) in tRNA + S-adenosyl-L-methionine = 5-methyluridine(54) in tRNA + S-adenosyl-L-homocysteine + H(+). It catalyses the reaction uridine(341) in tmRNA + S-adenosyl-L-methionine = 5-methyluridine(341) in tmRNA + S-adenosyl-L-homocysteine + H(+). In terms of biological role, dual-specificity methyltransferase that catalyzes the formation of 5-methyluridine at position 54 (m5U54) in all tRNAs, and that of position 341 (m5U341) in tmRNA (transfer-mRNA). The polypeptide is tRNA/tmRNA (uracil-C(5))-methyltransferase (Aeromonas salmonicida (strain A449)).